The sequence spans 74 residues: Defensin Lc-def (74 aa).

The N-terminal stretch at 1 to 27 (MEKKTVAALSFLFIVLFVAQEIAVTEA) is a signal peptide. 4 disulfides stabilise this stretch: C30–C74, C41–C62, C47–C68, and C51–C70.

The protein resides in the secreted. In terms of biological role, has antifungal activity against the phytopathogenic fungus A.niger VKM F-2259, but not against A.alternata VKM F-3047. Does not inhibit trypsin or chymotrypsin. This is Defensin Lc-def from Lens culinaris subsp. culinaris (Cultivated lentil).